The chain runs to 609 residues: Replication factor A protein 1 (609 aa).

Over residues 130–152 the composition is skewed to polar residues; it reads QNEQNNASAPRTGISTSTNSFYG. Residues 130 to 166 form a disordered region; sequence QNEQNNASAPRTGISTSTNSFYGNNAAATAPAPPPMM. Residues 192–278 constitute a DNA-binding region (OB); sequence WTIRARVTNK…NEYELMFERD (87 aa). The segment at 477 to 498 adopts a C4-type zinc-finger fold; it reads CPAADCNKKVFDQGGSWRCEKC.

The protein belongs to the replication factor A protein 1 family. Component of the heterotrimeric canonical replication protein A complex (RPA).

Its subcellular location is the nucleus. As part of the replication protein A (RPA/RP-A), a single-stranded DNA-binding heterotrimeric complex, may play an essential role in DNA replication, recombination and repair. Binds and stabilizes single-stranded DNA intermediates, preventing complementary DNA reannealing and recruiting different proteins involved in DNA metabolism. The sequence is that of Replication factor A protein 1 (ssb1) from Schizosaccharomyces pombe (strain 972 / ATCC 24843) (Fission yeast).